The primary structure comprises 2164 residues: MRKLNSLFSLAVLLSLLCWGQTAAAQGGPKTAPSVTHQAVQKGIRTSKAKDLRDPIPAGMARIILEAHDVWEDGTGYQMLWDADHNQYGASIPEESFWFANGTIPAGLYDPFEYKVPVNADASFSPTNFVLDGTASADIPAGTYDYVIINPNPGIIYIVGEGVSKGNDYVVEAGKTYHFTVQRQGPGDAASVVVTGEGGNEFAPVQNLQWSVSGQTVTLTWQAPASDKRTYVLNESFDTQTLPNGWTMIDADGDGHNWLSTINVYNTATHTGDGAMFSKSWTASSGAKIDLSPDNYLVTPKFTVPENGKLSYWVSSQEPWTNEHYGVFLSTTGNEAANFTIKLLEETLGSGKPAPMNLVKSEGVKAPAPYQERTIDLSAYAGQQVYLAFRHFGCTGIFRLYLDDVAVSGEGSSNDYTYTVYRDNVVIAQNLTATTFNQENVAPGQYNYCVEVKYTAGVSPKVCKDVTVEGSNEFAPVQNLTGSAVGQKVTLKWDAPNGTPNPNPGTTTLSESFENGIPASWKTIDADGDGNNWTTTPPPGGSSFAGHNSAICVSSASYINFEGPQNPDNYLVTPELSLPNGGTLTFWVCAQDANYASEHYAVYASSTGNDASNFANALLEEVLTAKTVVTAPEAIRGTRVQGTWYQKTVQLPAGTKYVAFRHFGCTDFFWINLDDVEIKANGKRADFTETFESSTHGEAPAEWTTIDADGDGQGWLCLSSGQLGWLTAHGGTNVVASFSWNGMALNPDNYLISKDVTGATKVKYYYAVNDGFPGDHYAVMISKTGTNAGDFTVVFEETPNGINKGGARFGLSTEANGAKPQSVWIERTVDLPAGTKYVAFRHYNCSDLNYILLDDIQFTMGGSPTPTDYTYTVYRDGTKIKEGLTETTFEEDGVATGNHEYCVEVKYTAGVSPKECVNVTVDPVQFNPVQNLTGSAVGQKVTLKWDAPNGTPNPNPGTTTLSESFENGIPASWKTIDADGDGNNWTTTPPPGGTSFAGHNSAICVSSASYINFEGPQNPDNYLVTPELSLPNGGTLTFWVCAQDANYASEHYAVYASSTGNDASNFANALLEEVLTAKTVVTAPEAIRGTRVQGTWYQKTVQLPAGTKYVAFRHFGCTDFFWINLDDVEIKANGKRADFTETFESSTHGEAPAEWTTIDADGDGQGWLCLSSGQLDWLTAHGGTNVVASFSWNGMALNPDNYLISKDVTGATKVKYYYAVNDGFPGDHYAVMISKTGTNAGDFTVVFEETPNGINKGGARFGLSTEANGAKPQSVWIERTVDLPAGTKYVAFRHYNCSDLNYILLDDIQFTMGGSPTPTDYTYTVYRDGTKIKEGLTETTFEEDGVATGNHEYCVEVKYTAGVSPKECVNVTVDPVQFNPVQNLTGSAVGQKVTLKWDAPNGTPNPNPGTTTLSESFENGIPASWKTIDADGDGNNWTTTPPPGGTSFAGHNSAICVSSASYINFEGPQNPDNYLVTPELSLPNGGTLTFWVCAQDANYASEHYAVYASSTGNDASNFANALLEEVLTAKTVVTAPEAIRGTRVQGTWYQKTVQLPAGTKYVAFRHFGCTDFFWINLDDVEIKANGKRADFTETFESSTHGEAPAEWTTIDADGDGQGWLCLSSGQLGWLTAHGGTNVVASFSWNGMALNPDNYLISKDVTGATKVKYYYAVNDGFPGDHYAVMISKTGTNAGDFTVVFEETPNGINKGGARFGLSTEANGAKPQSVWIERTVDLPAGTKYVAFRHYNCSDLNYILLDDIQFTMGGSPTPTDYTYTVYRDGTKIKEGLTETTFEEDGVATGNHEYCVEVKYTAGVSPKECVNVTINPTQFNPVQNLTAEQAPNSMDAILKWNAPASKRAEVLNEDFENGIPASWKTIDADGDGNNWTTTPPPGGSSFAGHNSAICVSSASYINFEGPQNPDNYLVTPELSLPGGGTLTFWVCAQDANYASEHYAVYASSTGNDASNFANALLEEVLTAKTVVTAPEAIRGTRVQGTWYQKTVQLPAGTKYVAFRHFGCTDFFWINLDDVVITSGNAPSYTYTIYRNNTQIASGVTETTYRDPDLATGFYTYGVKVVYPNGESAIETATLNITSLADVTAQKPYTLTVVGKTITVTCQGEAMIYDMNGRRLAAGRNTVVYTAQGGHYAVMVVVDGKSYVEKLAVK.

Residues 1–25 (MRKLNSLFSLAVLLSLLCWGQTAAA) form the signal peptide. 3 peptidase C25-like regions span residues 26–539 (QGGP…TPPP), 540–991 (GGSS…TPPP), and 992–1443 (GGTS…TPPP). Disordered stretches follow at residues 493-512 (WDAP…LSES) and 520-541 (SWKT…PPGG). Residues 496–508 (PNGTPNPNPGTTT) are compositionally biased toward low complexity.

Belongs to the peptidase C25 family.

Functionally, agglutinates erythrocytes. This Porphyromonas gingivalis (strain ATCC BAA-308 / W83) protein is Hemagglutinin A (hagA).